A 133-amino-acid chain; its full sequence is Small ribosomal subunit protein uS8 (133 aa).

The protein belongs to the universal ribosomal protein uS8 family. In terms of assembly, part of the 30S ribosomal subunit. Contacts proteins S5 and S12.

In terms of biological role, one of the primary rRNA binding proteins, it binds directly to 16S rRNA central domain where it helps coordinate assembly of the platform of the 30S subunit. The protein is Small ribosomal subunit protein uS8 of Leptospira interrogans serogroup Icterohaemorrhagiae serovar copenhageni (strain Fiocruz L1-130).